A 337-amino-acid chain; its full sequence is Transcription factor bHLH121 (337 aa).

The bHLH domain maps to 58–108; it reads ARKSQKAGREKLRREKLNEHFVELGNVLDPERPKNDKATILTDTVQLLKEL. The tract at residues 235–337 is disordered; it reads VHIPQNPGNR…AGGQKPDDAK (103 aa). Basic and acidic residues-rich tracts occupy residues 244–263 and 280–291; these read RSRE…KAED and SDKDTLQRPEKT. The segment covering 297–317 has biased composition (low complexity); that stretch reads NNNNNSIEESSHSSKCSSSPS.

As to quaternary structure, homodimer. In terms of tissue distribution, expressed constitutively in roots, leaves, stems, and flowers.

The protein localises to the nucleus. The chain is Transcription factor bHLH121 (BHLH121) from Arabidopsis thaliana (Mouse-ear cress).